We begin with the raw amino-acid sequence, 1028 residues long: Isoleucine--tRNA ligase (1028 aa).

Residues 51-61 (PTANGRPHIGH) carry the 'HIGH' region motif. The 'KMSKS' region signature appears at 591–595 (KMSKS). Lys-594 lines the ATP pocket.

Belongs to the class-I aminoacyl-tRNA synthetase family. IleS type 2 subfamily. As to quaternary structure, monomer. The cofactor is Zn(2+).

It localises to the cytoplasm. It catalyses the reaction tRNA(Ile) + L-isoleucine + ATP = L-isoleucyl-tRNA(Ile) + AMP + diphosphate. In terms of biological role, catalyzes the attachment of isoleucine to tRNA(Ile). As IleRS can inadvertently accommodate and process structurally similar amino acids such as valine, to avoid such errors it has two additional distinct tRNA(Ile)-dependent editing activities. One activity is designated as 'pretransfer' editing and involves the hydrolysis of activated Val-AMP. The other activity is designated 'posttransfer' editing and involves deacylation of mischarged Val-tRNA(Ile). The polypeptide is Isoleucine--tRNA ligase (Thermoplasma volcanium (strain ATCC 51530 / DSM 4299 / JCM 9571 / NBRC 15438 / GSS1)).